The following is a 501-amino-acid chain: Ribose import ATP-binding protein RbsA (501 aa).

2 ABC transporter domains span residues 6-242 (LQLS…VGRK) and 253-495 (VHGQ…VGKK). ATP is bound at residue 38 to 45 (GENGAGKS).

This sequence belongs to the ABC transporter superfamily. Ribose importer (TC 3.A.1.2.1) family. The complex is composed of an ATP-binding protein (RbsA), two transmembrane proteins (RbsC) and a solute-binding protein (RbsB).

The protein resides in the cell inner membrane. It carries out the reaction D-ribose(out) + ATP + H2O = D-ribose(in) + ADP + phosphate + H(+). Functionally, part of the ABC transporter complex RbsABC involved in ribose import. Responsible for energy coupling to the transport system. This is Ribose import ATP-binding protein RbsA from Vibrio vulnificus (strain CMCP6).